A 494-amino-acid chain; its full sequence is Cardiolipin synthase (494 aa).

Helical transmembrane passes span isoleucine 14–isoleucine 34 and isoleucine 45–leucine 65. 2 PLD phosphodiesterase domains span residues methionine 229–tyrosine 256 and aspartate 407–serine 434. Residues histidine 234, lysine 236, aspartate 241, histidine 412, lysine 414, and aspartate 419 contribute to the active site.

This sequence belongs to the phospholipase D family. Cardiolipin synthase subfamily.

It localises to the cell membrane. It catalyses the reaction 2 a 1,2-diacyl-sn-glycero-3-phospho-(1'-sn-glycerol) = a cardiolipin + glycerol. In terms of biological role, catalyzes the reversible phosphatidyl group transfer from one phosphatidylglycerol molecule to another to form cardiolipin (CL) (diphosphatidylglycerol) and glycerol. In Staphylococcus aureus (strain Mu50 / ATCC 700699), this protein is Cardiolipin synthase (cls).